A 411-amino-acid polypeptide reads, in one-letter code: Carbamoyl phosphate synthase arginine-specific small chain (411 aa).

L-glutamine-binding residues include serine 50, glycine 232, and glycine 234. Residues 185–376 (NVALIDCGVK…FDNIEKYQLQ (192 aa)) enclose the Glutamine amidotransferase type-1 domain. Cysteine 264 acts as the Nucleophile in catalysis. L-glutamine is bound by residues leucine 265, glutamine 268, asparagine 306, glycine 308, and tyrosine 309. Catalysis depends on residues histidine 349 and glutamate 351.

Belongs to the CarA family. In terms of assembly, heterodimer composed of 2 chains; the small (or glutamine) chain promotes the hydrolysis of glutamine to ammonia, which is used by the large (or ammonia) chain to synthesize carbamoyl phosphate.

Its subcellular location is the cytoplasm. It carries out the reaction hydrogencarbonate + L-glutamine + 2 ATP + H2O = carbamoyl phosphate + L-glutamate + 2 ADP + phosphate + 2 H(+). It catalyses the reaction L-glutamine + H2O = L-glutamate + NH4(+). It participates in amino-acid biosynthesis; L-arginine biosynthesis; carbamoyl phosphate from bicarbonate: step 1/1. Its function is as follows. Small subunit of the arginine-specific carbamoyl phosphate synthase (CPSase). CPSase catalyzes the formation of carbamoyl phosphate from the ammonia moiety of glutamine, carbonate, and phosphate donated by ATP, constituting the first step of 2 biosynthetic pathways, one leading to arginine and/or urea and the other to pyrimidine nucleotides. The small subunit (glutamine amidotransferase) binds and cleaves glutamine to supply the large subunit with the substrate ammonia. In Saccharomyces cerevisiae (strain ATCC 204508 / S288c) (Baker's yeast), this protein is Carbamoyl phosphate synthase arginine-specific small chain (CPA1).